We begin with the raw amino-acid sequence, 312 residues long: tRNA dimethylallyltransferase (312 aa).

Residue 11–18 (GLTATGKT) participates in ATP binding. 13-18 (TATGKT) lines the substrate pocket. The tract at residues 36 to 39 (DSMC) is interaction with substrate tRNA.

This sequence belongs to the IPP transferase family. As to quaternary structure, monomer. Requires Mg(2+) as cofactor.

The catalysed reaction is adenosine(37) in tRNA + dimethylallyl diphosphate = N(6)-dimethylallyladenosine(37) in tRNA + diphosphate. In terms of biological role, catalyzes the transfer of a dimethylallyl group onto the adenine at position 37 in tRNAs that read codons beginning with uridine, leading to the formation of N6-(dimethylallyl)adenosine (i(6)A). The sequence is that of tRNA dimethylallyltransferase from Caldicellulosiruptor bescii (strain ATCC BAA-1888 / DSM 6725 / KCTC 15123 / Z-1320) (Anaerocellum thermophilum).